The following is a 458-amino-acid chain: Translation initiation factor eIF2B subunit gamma (458 aa).

Phosphoserine is present on Ser-291.

The protein belongs to the eIF-2B gamma/epsilon subunits family. In terms of assembly, component of the translation initiation factor 2B (eIF2B) complex which is a heterodecamer of two sets of five different subunits: alpha, beta, gamma, delta and epsilon. Subunits alpha, beta and delta comprise a regulatory subcomplex and subunits epsilon and gamma comprise a catalytic subcomplex. Within the complex, the hexameric regulatory complex resides at the center, with the two heterodimeric catalytic subcomplexes bound on opposite sides.

It localises to the cytoplasm. The protein localises to the cytosol. Its function is as follows. Acts as a component of the translation initiation factor 2B (eIF2B) complex, which catalyzes the exchange of GDP for GTP on the eukaryotic initiation factor 2 (eIF2) complex gamma subunit. Its guanine nucleotide exchange factor activity is repressed when bound to eIF2 complex phosphorylated on the alpha subunit, thereby limiting the amount of methionyl-initiator methionine tRNA available to the ribosome and consequently global translation is repressed. The polypeptide is Translation initiation factor eIF2B subunit gamma (tif223) (Schizosaccharomyces pombe (strain 972 / ATCC 24843) (Fission yeast)).